Here is a 221-residue protein sequence, read N- to C-terminus: Sugar transporter SWEET1 (221 aa).

7 consecutive transmembrane segments (helical) span residues 3–23 (AGGFLDSLIYGACVVFTLGMF), 42–62 (VQFLPFLTTEVNNLGWLSYGA), 68–88 (ILIVVNTVGAALQTLYILAYL), 96–116 (VVLLQTATLLGVLLLGYGYFW), 129–149 (LGLFCSVFTISMYLSPLADLA), 160–180 (LSYPLTIATLLTSASWCLYGF), and 186–206 (YIMVSNFPGIVTSFIRFWLFW). A MtN3/slv 1 domain is found at 10 to 94 (LIYGACVVFT…LAYLHYCPRK (85 aa)). A MtN3/slv 2 domain is found at 127-212 (QQLGLFCSVF…WLFWKYPQEQ (86 aa)). The mediates interaction with TRPV2 stretch occupies residues 149 to 221 (AKVIQTKSTQ…QDRNYWLLQT (73 aa)).

The protein belongs to the SWEET sugar transporter family. In terms of assembly, interacts with TRPV2; the interaction probably occurs intracellularly and depends on TRPV2 N-glycosylation. As to expression, ubiquitously expressed with highest expression in oviduct, epididymis and intestine.

It localises to the golgi apparatus membrane. The protein resides in the cell membrane. Mediates sugar transport across membranes. May stimulate V(D)J recombination by the activation of RAG1. This chain is Sugar transporter SWEET1 (SLC50A1), found in Homo sapiens (Human).